Consider the following 49-residue polypeptide: Large ribosomal subunit protein bL33 (49 aa).

The protein belongs to the bacterial ribosomal protein bL33 family.

This Clostridium botulinum (strain ATCC 19397 / Type A) protein is Large ribosomal subunit protein bL33.